The primary structure comprises 955 residues: 2-oxoglutarate dehydrogenase E1 component (955 aa).

The protein belongs to the alpha-ketoglutarate dehydrogenase family. As to quaternary structure, homodimer. Part of the 2-oxoglutarate dehydrogenase (OGDH) complex composed of E1 (2-oxoglutarate dehydrogenase), E2 (dihydrolipoamide succinyltransferase) and E3 (dihydrolipoamide dehydrogenase); the complex contains multiple copies of the three enzymatic components (E1, E2 and E3). It depends on thiamine diphosphate as a cofactor.

It carries out the reaction N(6)-[(R)-lipoyl]-L-lysyl-[protein] + 2-oxoglutarate + H(+) = N(6)-[(R)-S(8)-succinyldihydrolipoyl]-L-lysyl-[protein] + CO2. E1 component of the 2-oxoglutarate dehydrogenase (OGDH) complex which catalyzes the decarboxylation of 2-oxoglutarate, the first step in the conversion of 2-oxoglutarate to succinyl-CoA and CO(2). The chain is 2-oxoglutarate dehydrogenase E1 component from Bacillus mycoides (strain KBAB4) (Bacillus weihenstephanensis).